Consider the following 237-residue polypeptide: Orotidine 5'-phosphate decarboxylase (237 aa).

Substrate contacts are provided by residues D17, K39, D66–T75, T121, R182, Q191, G211, and R212. K68 (proton donor) is an active-site residue.

Belongs to the OMP decarboxylase family. Type 1 subfamily. As to quaternary structure, homodimer.

It carries out the reaction orotidine 5'-phosphate + H(+) = UMP + CO2. It participates in pyrimidine metabolism; UMP biosynthesis via de novo pathway; UMP from orotate: step 2/2. In terms of biological role, catalyzes the decarboxylation of orotidine 5'-monophosphate (OMP) to uridine 5'-monophosphate (UMP). The polypeptide is Orotidine 5'-phosphate decarboxylase (Bradyrhizobium diazoefficiens (strain JCM 10833 / BCRC 13528 / IAM 13628 / NBRC 14792 / USDA 110)).